The sequence spans 30 residues: Photosystem I reaction center subunit XII (30 aa).

A helical membrane pass occupies residues 6–26 (VFTILAIALVPAVMAALLGSA).

It belongs to the PsaM family.

Its subcellular location is the cellular thylakoid membrane. The sequence is that of Photosystem I reaction center subunit XII from Synechococcus sp. (strain JA-3-3Ab) (Cyanobacteria bacterium Yellowstone A-Prime).